The primary structure comprises 73 residues: Cell division protein ZapB (73 aa).

A coiled-coil region spans residues 3–69; sequence LELLSKLETK…EKVTGLVGLL (67 aa). Residues 30 to 50 are disordered; sequence EKQKSSTLSEHNQQLNEQNQQ. Low complexity predominate over residues 41–50; sequence NQQLNEQNQQ.

The protein belongs to the ZapB family. In terms of assembly, homodimer. The ends of the coiled-coil dimer bind to each other, forming polymers. Interacts with FtsZ.

The protein resides in the cytoplasm. Non-essential, abundant cell division factor that is required for proper Z-ring formation. It is recruited early to the divisome by direct interaction with FtsZ, stimulating Z-ring assembly and thereby promoting cell division earlier in the cell cycle. Its recruitment to the Z-ring requires functional FtsA or ZipA. This Shewanella putrefaciens (strain CN-32 / ATCC BAA-453) protein is Cell division protein ZapB.